Reading from the N-terminus, the 1343-residue chain is Protein cordon-bleu (1343 aa).

Disordered regions lie at residues Met-1–Lys-51, Lys-301–Glu-479, Val-522–Glu-613, Ile-733–Leu-808, Glu-1056–Asp-1077, and Ile-1105–Gly-1148. Over residues Ala-20 to Ala-30 the composition is skewed to pro residues. Positions Lys-305–Pro-310 match the KKRRAP 1 motif. Residues Ser-324–Asn-335 show a composition bias toward polar residues. The KKRRAP 2 motif lies at Lys-338 to Pro-343. The segment covering Pro-343 to Pro-354 has biased composition (pro residues). The segment covering Asp-390 to Pro-400 has biased composition (basic and acidic residues). Positions Ser-406–Ser-422 are enriched in low complexity. A compositionally biased stretch (basic and acidic residues) spans Pro-445–Ser-460. Positions Glu-552–Val-573 are enriched in polar residues. Basic and acidic residues predominate over residues Pro-746–Glu-757. The segment covering Val-773 to Phe-789 has biased composition (polar residues). Over residues Ile-1105–Thr-1122 the composition is skewed to polar residues. Basic and acidic residues predominate over residues Lys-1128 to Ile-1137. WH2 domains are found at residues Ile-1167–Val-1187 and Glu-1207–Thr-1227. The tract at residues Asn-1246–Ala-1297 is disordered. Positions Phe-1261–Gly-1292 are enriched in pro residues. A WH2 3 domain is found at Ala-1297–Val-1317.

In terms of assembly, interacts with pacsin1.

Its subcellular location is the cell membrane. It is found in the cytoplasm. The protein localises to the cytoskeleton. The protein resides in the cell projection. It localises to the ruffle. Its subcellular location is the cytosol. Plays an important role in the reorganization of the actin cytoskeleton. Binds to and sequesters actin monomers (G actin). Nucleates actin polymerization by assembling three actin monomers in cross-filament orientation and thereby promotes growth of actin filaments at the barbed end. Can also mediate actin depolymerization at barbed ends and severing of actin filaments. Promotes formation of cell ruffles. Regulates neuron morphogenesis and increases branching of axons and dendrites. Required for normal embryonic development, including normal development of laterality, normal body size and shape, as well as normal brain, heart and kidney development. Required for normal development of stereocilia and kinocilia in sensory hair cells of neuromasts in the posterior lateral line organ, and thus also for balance keeping and normal swimming behavior. This chain is Protein cordon-bleu (cobl), found in Danio rerio (Zebrafish).